A 373-amino-acid polypeptide reads, in one-letter code: Dual-specificity RNA methyltransferase RlmN (373 aa).

Glu91 acts as the Proton acceptor in catalysis. Residues 97–339 (EDDRGTLCIS…TTVRKTRGDD (243 aa)) form the Radical SAM core domain. Cysteines 104 and 344 form a disulfide. [4Fe-4S] cluster is bound by residues Cys111, Cys115, and Cys118. Residues 165–166 (GE), Ser197, 219–221 (SLH), and Asn301 each bind S-adenosyl-L-methionine. Cys344 acts as the S-methylcysteine intermediate in catalysis.

Belongs to the radical SAM superfamily. RlmN family. The cofactor is [4Fe-4S] cluster.

It localises to the cytoplasm. The enzyme catalyses adenosine(2503) in 23S rRNA + 2 reduced [2Fe-2S]-[ferredoxin] + 2 S-adenosyl-L-methionine = 2-methyladenosine(2503) in 23S rRNA + 5'-deoxyadenosine + L-methionine + 2 oxidized [2Fe-2S]-[ferredoxin] + S-adenosyl-L-homocysteine. The catalysed reaction is adenosine(37) in tRNA + 2 reduced [2Fe-2S]-[ferredoxin] + 2 S-adenosyl-L-methionine = 2-methyladenosine(37) in tRNA + 5'-deoxyadenosine + L-methionine + 2 oxidized [2Fe-2S]-[ferredoxin] + S-adenosyl-L-homocysteine. Functionally, specifically methylates position 2 of adenine 2503 in 23S rRNA and position 2 of adenine 37 in tRNAs. m2A2503 modification seems to play a crucial role in the proofreading step occurring at the peptidyl transferase center and thus would serve to optimize ribosomal fidelity. This is Dual-specificity RNA methyltransferase RlmN from Paracidovorax citrulli (strain AAC00-1) (Acidovorax citrulli).